The following is a 229-amino-acid chain: MSARFIAVFCLFFTVTAHAQAPRTFSEAKKVAWKLYAPQSTEFYCGCKYNGNRVDLKACGYVPRKNANRADASNGNTSSRPGRSGISASAGKPVGAKTVRATTTCSSAPRRTCTTWCRASVRSMATVTTSVLDGCRCNVGKYGSCLTQVDFKAKKVMPRPSIRGMIARTYFYMSKQYGLRLSKQDRQLYEAWNKTYPVQPWERQRNQTVACVMGRGNEFVGPVNLKACG.

Residues 1-19 (MSARFIAVFCLFFTVTAHA) form the signal peptide. The segment at 69–95 (RADASNGNTSSRPGRSGISASAGKPVG) is disordered. Residues 71–81 (DASNGNTSSRP) are compositionally biased toward polar residues.

This sequence belongs to the EndA/NucM nuclease family.

It is found in the secreted. The polypeptide is Extracellular endonuclease (endX) (Pseudomonas fluorescens biotype A).